Here is a 118-residue protein sequence, read N- to C-terminus: NADH-ubiquinone oxidoreductase chain 3 (118 aa).

The next 3 membrane-spanning stretches (helical) occupy residues 7-27 (ICIS…VPFL), 62-82 (LVSI…PWAV), and 87-107 (IDLF…IGFL).

This sequence belongs to the complex I subunit 3 family.

The protein localises to the mitochondrion membrane. It catalyses the reaction a ubiquinone + NADH + 5 H(+)(in) = a ubiquinol + NAD(+) + 4 H(+)(out). Core subunit of the mitochondrial membrane respiratory chain NADH dehydrogenase (Complex I) that is believed to belong to the minimal assembly required for catalysis. Complex I functions in the transfer of electrons from NADH to the respiratory chain. The immediate electron acceptor for the enzyme is believed to be ubiquinone. The chain is NADH-ubiquinone oxidoreductase chain 3 (ND3) from Oenothera berteroana (Bertero's evening primrose).